We begin with the raw amino-acid sequence, 135 residues long: Small ribosomal subunit protein uS9 (135 aa).

Residues 102 to 115 (PLKTEGHLSRDPRA) are compositionally biased toward basic and acidic residues. The disordered stretch occupies residues 102–135 (PLKTEGHLSRDPRAKERRKYGLKKARKAPQFSKR). The span at 116–135 (KERRKYGLKKARKAPQFSKR) shows a compositional bias: basic residues.

The protein belongs to the universal ribosomal protein uS9 family.

The polypeptide is Small ribosomal subunit protein uS9 (Synechococcus sp. (strain CC9311)).